The primary structure comprises 393 residues: NAD(P)H-quinone oxidoreductase subunit H, chloroplastic (393 aa).

The protein belongs to the complex I 49 kDa subunit family. In terms of assembly, NDH is composed of at least 16 different subunits, 5 of which are encoded in the nucleus.

Its subcellular location is the plastid. The protein resides in the chloroplast thylakoid membrane. It carries out the reaction a plastoquinone + NADH + (n+1) H(+)(in) = a plastoquinol + NAD(+) + n H(+)(out). The catalysed reaction is a plastoquinone + NADPH + (n+1) H(+)(in) = a plastoquinol + NADP(+) + n H(+)(out). Its function is as follows. NDH shuttles electrons from NAD(P)H:plastoquinone, via FMN and iron-sulfur (Fe-S) centers, to quinones in the photosynthetic chain and possibly in a chloroplast respiratory chain. The immediate electron acceptor for the enzyme in this species is believed to be plastoquinone. Couples the redox reaction to proton translocation, and thus conserves the redox energy in a proton gradient. This chain is NAD(P)H-quinone oxidoreductase subunit H, chloroplastic, found in Cicer arietinum (Chickpea).